Here is a 107-residue protein sequence, read N- to C-terminus: Ig kappa chain V-VI region NQ2-48.2.2 (107 aa).

Positions 1-23 (QILLTQSPAIMSASPGQKVTMTC) are framework-1. Cysteine 23 and cysteine 87 are disulfide-bonded. The interval 24-33 (SASSSVSYMH) is complementarity-determining-1. The segment at 34-48 (WYQQKSGTSPKRWIY) is framework-2. The complementarity-determining-2 stretch occupies residues 49 to 55 (DTSKLAS). The tract at residues 56 to 87 (GVPARFSGSGSATSYSLTITSMQAEDAATYYC) is framework-3. The complementarity-determining-3 stretch occupies residues 88–96 (QQWSSNPLT). A framework-4 region spans residues 97–106 (FGAGTKLXLK).

In terms of biological role, anti-2-phenyl oxazolone (PHOX) Antibody. The chain is Ig kappa chain V-VI region NQ2-48.2.2 from Mus musculus (Mouse).